A 640-amino-acid chain; its full sequence is Influenza virus NS1A-binding protein homolog B (640 aa).

The BTB domain maps to 32–100 (CDVRLLVCGH…AYTAQLKADK (69 aa)). The 52-residue stretch at 135–186 (AISYRNFASSMADGRLLGKIDGYIQDHLHEISEQDDFLKLPRLKLEVMLEDN) folds into the BACK domain. Positions 257 to 278 (KKPPRERDEMGSGASGSISPSN) are disordered. Positions 267 to 278 (GSGASGSISPSN) are enriched in low complexity. Kelch repeat units follow at residues 366–412 (KLIA…VLMG), 413–460 (EVYV…SLQN), 462–509 (LFVV…ELSG), 510–556 (YMYV…VYEG), 557–603 (KLFV…VLNN), and 605–640 (LCAVGGFDGNEFLNSMEVYNLEKNEWSPFIEALGKN).

The protein resides in the cytoplasm. Its subcellular location is the cytoskeleton. It is found in the nucleus. Functionally, plays a role in cell division and in the dynamic organization of the actin skeleton as a stabilizer of actin filaments by association with F-actin through Kelch repeats. This chain is Influenza virus NS1A-binding protein homolog B (ivns1abpb), found in Danio rerio (Zebrafish).